A 309-amino-acid chain; its full sequence is Probable manganese-dependent inorganic pyrophosphatase (309 aa).

Positions 9, 13, 15, 75, 97, and 149 each coordinate Mn(2+).

It belongs to the PPase class C family. Mn(2+) serves as cofactor.

It localises to the cytoplasm. The catalysed reaction is diphosphate + H2O = 2 phosphate + H(+). The sequence is that of Probable manganese-dependent inorganic pyrophosphatase from Bacillus anthracis (strain CDC 684 / NRRL 3495).